The chain runs to 270 residues: Regulatory protein RecX (270 aa).

This sequence belongs to the RecX family.

The protein localises to the cytoplasm. Its function is as follows. Modulates RecA activity. The protein is Regulatory protein RecX of Bacillus cereus (strain 03BB102).